Consider the following 72-residue polypeptide: Hirudin variant-2 (72 aa).

An N-terminal signal peptide occupies residues 1 to 7; sequence AICVSQA. The interval 8–10 is interaction with thrombin active site; it reads ITY. Disulfide bonds link C13-C21, C23-C35, and C29-C46. Positions 47–72 are disordered; sequence VTGEGTPNPESHNNGDFEEIPEEYLQ. Residue T52 is glycosylated (O-linked (GalNAc...) threonine). The interaction with fibrinogen-binding exosite of thrombin stretch occupies residues 62–72; that stretch reads DFEEIPEEYLQ. Residues 62–72 show a composition bias toward acidic residues; that stretch reads DFEEIPEEYLQ. A Sulfotyrosine modification is found at Y70.

The protein belongs to the protease inhibitor I14 (hirudin) family.

The protein resides in the secreted. Its function is as follows. Hirudin is a potent thrombin-specific protease inhibitor. It forms a stable non-covalent complex with alpha-thrombin, thereby abolishing its ability to cleave fibrinogen. This chain is Hirudin variant-2, found in Hirudo medicinalis (Medicinal leech).